The primary structure comprises 380 residues: Hydrogenase maturation factor HypD1 (380 aa).

The Fe cation site is built by C36, C64, and C67.

Belongs to the HypD family. [4Fe-4S] cluster is required as a cofactor.

It functions in the pathway protein modification; [NiFe] hydrogenase maturation. Its function is as follows. Involved in the maturation of [NiFe] hydrogenases. Involved in the biosynthesis of the Fe(CN)(2)CO cofactor. The sequence is that of Hydrogenase maturation factor HypD1 (hypD1) from Bradyrhizobium diazoefficiens (strain JCM 10833 / BCRC 13528 / IAM 13628 / NBRC 14792 / USDA 110).